Reading from the N-terminus, the 230-residue chain is Chalcone--flavanone isomerase (230 aa).

Substrate is bound by residues Thr-52, Asn-117, and Ser-194.

The protein belongs to the chalcone isomerase family.

It catalyses the reaction a chalcone = a flavanone.. It functions in the pathway secondary metabolite biosynthesis; flavonoid biosynthesis. In terms of biological role, catalyzes the intramolecular cyclization of bicyclic chalcones into tricyclic (S)-flavanones. Responsible for the isomerization of 4,2',4',6'-tetrahydroxychalcone (also termed chalcone) into naringenin. The chain is Chalcone--flavanone isomerase (CHI) from Camellia sinensis (Tea plant).